The following is a 135-amino-acid chain: ATP synthase epsilon chain (135 aa).

Belongs to the ATPase epsilon chain family. In terms of assembly, F-type ATPases have 2 components, CF(1) - the catalytic core - and CF(0) - the membrane proton channel. CF(1) has five subunits: alpha(3), beta(3), gamma(1), delta(1), epsilon(1). CF(0) has three main subunits: a, b and c.

It localises to the cell inner membrane. Functionally, produces ATP from ADP in the presence of a proton gradient across the membrane. The chain is ATP synthase epsilon chain from Desulforapulum autotrophicum (strain ATCC 43914 / DSM 3382 / VKM B-1955 / HRM2) (Desulfobacterium autotrophicum).